Consider the following 598-residue polypeptide: Arginine--tRNA ligase (598 aa).

The 'HIGH' region motif lies at 131 to 141; it reads ANPTGPMHVGH. The tract at residues 288–309 is disordered; sequence KLPPPKSKKGQPPPQAQPDEEG.

Belongs to the class-I aminoacyl-tRNA synthetase family. In terms of assembly, monomer.

Its subcellular location is the cytoplasm. It catalyses the reaction tRNA(Arg) + L-arginine + ATP = L-arginyl-tRNA(Arg) + AMP + diphosphate. The chain is Arginine--tRNA ligase from Anaeromyxobacter dehalogenans (strain 2CP-C).